Consider the following 334-residue polypeptide: 7,8-didemethyl-8-hydroxy-5-deazariboflavin synthase (334 aa).

Residues 2-248 (VSYSKNVFVP…PDVPVQVPPN (247 aa)) enclose the Radical SAM core domain. Residues C16, C20, and C23 each coordinate [4Fe-4S] cluster.

This sequence belongs to the radical SAM superfamily. CofG family. As to quaternary structure, consists of two subunits, CofG and CofH. It depends on [4Fe-4S] cluster as a cofactor.

It catalyses the reaction 5-amino-5-(4-hydroxybenzyl)-6-(D-ribitylimino)-5,6-dihydrouracil + S-adenosyl-L-methionine = 7,8-didemethyl-8-hydroxy-5-deazariboflavin + 5'-deoxyadenosine + L-methionine + NH4(+) + H(+). It participates in cofactor biosynthesis; coenzyme F0 biosynthesis. Its function is as follows. Catalyzes the radical-mediated synthesis of 7,8-didemethyl-8-hydroxy-5-deazariboflavin from 5-amino-5-(4-hydroxybenzyl)-6-(D-ribitylimino)-5,6-dihydrouracil. The protein is 7,8-didemethyl-8-hydroxy-5-deazariboflavin synthase of Methanopyrus kandleri (strain AV19 / DSM 6324 / JCM 9639 / NBRC 100938).